Here is a 241-residue protein sequence, read N- to C-terminus: 3-oxoacyl-[acyl-carrier-protein] reductase FabG (241 aa).

NADP(+) is bound by residues 13-16, Ser38, 57-58, and Asn83; these read GASG and EI. Ser135 lines the substrate pocket. The active-site Proton acceptor is the Tyr148. NADP(+) contacts are provided by residues 148–152 and Ile181; that span reads YCASK.

This sequence belongs to the short-chain dehydrogenases/reductases (SDR) family. In terms of assembly, homotetramer.

The enzyme catalyses a (3R)-hydroxyacyl-[ACP] + NADP(+) = a 3-oxoacyl-[ACP] + NADPH + H(+). Its pathway is lipid metabolism; fatty acid biosynthesis. Functionally, catalyzes the NADPH-dependent reduction of beta-ketoacyl-ACP substrates to beta-hydroxyacyl-ACP products, the first reductive step in the elongation cycle of fatty acid biosynthesis. The protein is 3-oxoacyl-[acyl-carrier-protein] reductase FabG (fabG) of Rickettsia felis (strain ATCC VR-1525 / URRWXCal2) (Rickettsia azadi).